A 132-amino-acid chain; its full sequence is Small ribosomal subunit protein uS8 (132 aa).

This sequence belongs to the universal ribosomal protein uS8 family. Part of the 30S ribosomal subunit. Contacts proteins S5 and S12.

Functionally, one of the primary rRNA binding proteins, it binds directly to 16S rRNA central domain where it helps coordinate assembly of the platform of the 30S subunit. This is Small ribosomal subunit protein uS8 from Staphylococcus epidermidis (strain ATCC 35984 / DSM 28319 / BCRC 17069 / CCUG 31568 / BM 3577 / RP62A).